The sequence spans 328 residues: DNA-directed RNA polymerase subunit alpha (328 aa).

The tract at residues 1-234 (MQNSPTEYLK…GQLSVFADLE (234 aa)) is alpha N-terminal domain (alpha-NTD). The alpha C-terminal domain (alpha-CTD) stretch occupies residues 248–328 (VDPILLRPVD…NWPPAGLEKV (81 aa)).

It belongs to the RNA polymerase alpha chain family. As to quaternary structure, homodimer. The RNAP catalytic core consists of 2 alpha, 1 beta, 1 beta' and 1 omega subunit. When a sigma factor is associated with the core the holoenzyme is formed, which can initiate transcription.

It carries out the reaction RNA(n) + a ribonucleoside 5'-triphosphate = RNA(n+1) + diphosphate. Its function is as follows. DNA-dependent RNA polymerase catalyzes the transcription of DNA into RNA using the four ribonucleoside triphosphates as substrates. The polypeptide is DNA-directed RNA polymerase subunit alpha (Methylobacillus flagellatus (strain ATCC 51484 / DSM 6875 / VKM B-1610 / KT)).